The following is a 430-amino-acid chain: Aspartate aminotransferase, mitochondrial (430 aa).

A mitochondrion-targeting transit peptide spans 1–29 (MALLHSGRFLSGVAAAFHPGLAAAASARA). At threonine 48 the chain carries Phosphothreonine. At lysine 59 the chain carries N6-acetyllysine. Glycine 65 contacts substrate. Residue lysine 73 is modified to N6-acetyllysine; alternate. Position 73 is an N6-succinyllysine; alternate (lysine 73). The residue at position 82 (lysine 82) is an N6-acetyllysine. Residue lysine 90 is modified to N6-acetyllysine; alternate. Lysine 90 is subject to N6-succinyllysine; alternate. Tyrosine 96 carries the post-translational modification 3'-nitrotyrosine; alternate. Residue tyrosine 96 is modified to Phosphotyrosine; alternate. Lysine 107 and lysine 122 each carry N6-acetyllysine; alternate. Lysine 107 and lysine 122 each carry N6-succinyllysine; alternate. Phosphoserine is present on serine 143. The residue at position 159 (lysine 159) is an N6-acetyllysine; alternate. Lysine 159 carries the post-translational modification N6-succinyllysine; alternate. Tryptophan 162 serves as a coordination point for substrate. An N6-acetyllysine; alternate modification is found at lysine 185. At lysine 185 the chain carries N6-succinyllysine; alternate. Substrate is bound at residue asparagine 215. Lysine 227 is modified (N6-succinyllysine). Lysine 234 carries the post-translational modification N6-acetyllysine. N6-acetyllysine; alternate occurs at positions 279 and 296. Lysine 279 is subject to N6-(pyridoxal phosphate)lysine; alternate. The residue at position 296 (lysine 296) is an N6-succinyllysine; alternate. Position 302 is an N6-acetyllysine (lysine 302). An N6-acetyllysine; alternate modification is found at lysine 309. The residue at position 309 (lysine 309) is an N6-succinyllysine; alternate. Residue arginine 313 is modified to Asymmetric dimethylarginine. Lysine 338 carries the post-translational modification N6-acetyllysine; alternate. N6-succinyllysine; alternate is present on lysine 338. Lysine 345 is subject to N6-acetyllysine. Lysine 363 is modified (N6-acetyllysine; alternate). Lysine 363 carries the post-translational modification N6-succinyllysine; alternate. Lysine 364 and lysine 387 each carry N6-acetyllysine. N6-acetyllysine; alternate is present on residues lysine 396 and lysine 404. N6-succinyllysine; alternate occurs at positions 396 and 404. Arginine 407 is a substrate binding site.

This sequence belongs to the class-I pyridoxal-phosphate-dependent aminotransferase family. In terms of assembly, homodimer. The cofactor is pyridoxal 5'-phosphate.

Its subcellular location is the mitochondrion matrix. The protein resides in the cell membrane. The enzyme catalyses L-aspartate + 2-oxoglutarate = oxaloacetate + L-glutamate. The catalysed reaction is L-kynurenine + 2-oxoglutarate = 4-(2-aminophenyl)-2,4-dioxobutanoate + L-glutamate. In terms of biological role, catalyzes the irreversible transamination of the L-tryptophan metabolite L-kynurenine to form kynurenic acid (KA). As a member of the malate-aspartate shuttle, it has a key role in the intracellular NAD(H) redox balance. Is important for metabolite exchange between mitochondria and cytosol, and for amino acid metabolism. Facilitates cellular uptake of long-chain free fatty acids. This chain is Aspartate aminotransferase, mitochondrial (GOT2), found in Bos taurus (Bovine).